The chain runs to 446 residues: Protein adenylyltransferase FICD (446 aa).

Over 1 to 18 (MAVTECEWASLGSRIGLR) the chain is Cytoplasmic. Residues 19–39 (AALVLLSGSLLVVLFPLSGLE) form a helical; Signal-anchor for type II membrane protein membrane-spanning segment. The Lumenal segment spans residues 40 to 446 (HQYRTALNIL…ECKQTITIKT (407 aa)). TPR repeat units follow at residues 94–127 (AKAA…DPDH) and 128–161 (VDAL…SPHN). The Inhibitory (S/T)XXXE(G/N) motif signature appears at 218–223 (TVAIEG). Glutamate 222 contacts ATP. Asparagine 263 carries N-linked (GlcNAc...) asparagine glycosylation. Residues 273 to 408 (VTIDNILEIH…VRPFIRFIAK (136 aa)) enclose the Fido domain. Residue 304 to 307 (VGHH) coordinates ATP. Histidine 351 is a catalytic residue. Residues 355–362 (DGNGRTSR), 387–388 (YY), and asparagine 395 contribute to the ATP site.

It belongs to the fic family. As to quaternary structure, homodimer. Mg(2+) serves as cofactor. Mn(2+) is required as a cofactor.

It localises to the endoplasmic reticulum membrane. The catalysed reaction is L-tyrosyl-[protein] + ATP = O-(5'-adenylyl)-L-tyrosyl-[protein] + diphosphate. It catalyses the reaction 3-O-(5'-adenylyl)-L-threonyl-[protein] + H2O = L-threonyl-[protein] + AMP + H(+). The enzyme catalyses L-threonyl-[protein] + ATP = 3-O-(5'-adenylyl)-L-threonyl-[protein] + diphosphate. The side chain of Glu-222 determines which of the two opposing activities (AMPylase or de-AMPylase) will take place. In response to endoplasmic reticulum stress, mediates de-AMPylase activity. Adenylyltransferase activity is inhibited by the inhibitory helix present at the N-terminus: Glu-222 binds ATP and competes with ATP-binding at Arg-362, thereby preventing adenylyltransferase activity. In unstressed cells, disengagement of Glu-222 promotes adenylyltransferase activity. Activation dissociates ATP-binding from Glu-222, allowing ordered binding of the entire ATP moiety with the alpha-phosphate in an orientation that is productive for accepting an incoming target hydroxyl side chain. Its function is as follows. Protein that can both mediate the addition of adenosine 5'-monophosphate (AMP) to specific residues of target proteins (AMPylation), and the removal of the same modification from target proteins (de-AMPylation), depending on the context. The side chain of Glu-222 determines which of the two opposing activities (AMPylase or de-AMPylase) will take place. Acts as a key regulator of the ERN1/IRE1-mediated unfolded protein response (UPR) by mediating AMPylation or de-AMPylation of HSPA5/BiP. In unstressed cells, acts as an adenylyltransferase by mediating AMPylation of HSPA5/BiP at 'Thr-518', thereby inactivating it. In response to endoplasmic reticulum stress, acts as a phosphodiesterase by mediating removal of ATP (de-AMPylation) from HSPA5/BiP at 'Thr-518', leading to restore HSPA5/BiP activity. The protein is Protein adenylyltransferase FICD of Xenopus tropicalis (Western clawed frog).